A 318-amino-acid polypeptide reads, in one-letter code: uncharacterized protein (318 aa).

A coiled-coil region spans residues 67–157 (LAFDELEKEK…SLKAIQTSQE (91 aa)). The tract at residues 172-318 (ESTNKVEKNA…KGFFARLFNL (147 aa)) is disordered. 2 stretches are compositionally biased toward basic and acidic residues: residues 175–193 (NKVEKNAVTEDKADSKDSK) and 219–236 (KVDKEDQISATEAIEKAS). A compositionally biased stretch (polar residues) spans 237–248 (VEQSKNGNAAET). 2 stretches are compositionally biased toward basic and acidic residues: residues 249–274 (SNKEATIDAEAQHDAEQQVAEAHAEA) and 300–310 (SEPKPQEEKKG).

This is an uncharacterized protein from Staphylococcus aureus (strain MW2).